Consider the following 476-residue polypeptide: Trigger factor (476 aa).

Residues 169–254 (GDKVTLDYVG…VKEVAAAEEL (86 aa)) enclose the PPIase FKBP-type domain. Residues 437-476 (SRDELLAEDEAEGEEKKAAGETKKKAAPKKKAAKKESAAE) are disordered. A compositionally biased stretch (basic and acidic residues) spans 450–460 (EEKKAAGETKK).

The protein belongs to the FKBP-type PPIase family. Tig subfamily.

The protein localises to the cytoplasm. It catalyses the reaction [protein]-peptidylproline (omega=180) = [protein]-peptidylproline (omega=0). Involved in protein export. Acts as a chaperone by maintaining the newly synthesized protein in an open conformation. Functions as a peptidyl-prolyl cis-trans isomerase. In Chelativorans sp. (strain BNC1), this protein is Trigger factor.